A 399-amino-acid polypeptide reads, in one-letter code: MDFQVIIIGGGIVGLATGLKIKQRNPNIKVALLEKEEEVAKHQTGNNSGVIHSGLYYKPGSLKAKNCIEGYHELVRFCEEENIPFELTGKVVVATRKEQVPLLNSLLERGLQNGLKGTRSITLDELKHFEPYCAGVAAIHVPQTGIVDYKLVAEKYAEKFQILGGQVFLGHKVIKVETQNTASIIHTSKGSFSTNLLINCAGLYSDKVAQMNQKESLDVKIIPFRGEYYKIKKEREYLVKNLIYPVPDPNFPFLGVHFTRMMKGGVEAGPNAVLAFKREGYKKSQVNFSELAETLSWPGFQKVASKYWKTGMGELFRSFSKKAFTDALKELIPDIQESDLIEGGAGVRAQACDRTGGLLDDFCIREDQNAIHVLNAPSPAATSSLSIGGTVCEWALKRF.

The protein belongs to the L2HGDH family. Requires FAD as cofactor.

It carries out the reaction (S)-2-hydroxyglutarate + A = 2-oxoglutarate + AH2. Its function is as follows. Catalyzes the dehydrogenation of L-2-hydroxyglutarate (L2HG or(S)-2-hydroxyglutarate) to 2-oxoglutarate (alpha-ketoglutarate). Active in vitro with the artificial electron acceptor 2,6-dichlorophenolindophenol (DCPIP). Also displays a very low oxidase activity in vitro on L-2-hydroxyglutarate with O2 as the electron acceptor, but this activity is most likely not physiological. This chain is L-2-hydroxyglutarate dehydrogenase, found in Indibacter alkaliphilus (strain CCUG 57479 / KCTC 22604 / LW1).